We begin with the raw amino-acid sequence, 421 residues long: Vinorine synthase (421 aa).

Active-site proton acceptor residues include His160 and Asp362.

This sequence belongs to the plant acyltransferase family. In terms of assembly, monomer. In terms of tissue distribution, mainly expressed in roots and, to a lower level, in leaves.

The enzyme catalyses 16-epivellosimine + acetyl-CoA = vinorine + CoA. Its pathway is alkaloid biosynthesis; ajmaline biosynthesis. Complete inhibition by 4-(2-aminoethyl)-benzenesulfonyl fluoride (AEBSF), N-tosyl-L-phenylalanine chloromethylketone (TPCK), Hg(2+) and diethyl-pyrocarbonate (DEPC). 50% inhibition by N-(N-(L-3-trans-carboxirane-2-carbonyl)-L-leucyl)-agmanitine (E-64), N-alpha-p-tosyl-L-lysine chloromethylketone (TLCK) and phenylmethylsulfonyl fluoride (PMSF). In terms of biological role, acetyltransferase involved in the biosynthesis of ajmaline-type monoterpenoid indole alkaloids (MIAs) natural products, important plant-derived pharmaceuticals used in the therapy of heart disorders. Catalyzes the conversion of 16-epivellosimine to vinorine, precursor of vomilenine, an intermediate chemical in the biosynthesis of ajmaline. Acts on gardneral, but not on polyneuridine aldehyde or N-methylgardneral. The polypeptide is Vinorine synthase (Rauvolfia serpentina (Serpentine wood)).